The primary structure comprises 727 residues: MPPPADIVKVAIEWPGAYPKLMEIDQKKPLSAIIKEVCDGWSLANHEYFALQHADSSNFYITEKNRNEIKNGTILRLTTSPAQNAQQLHERIQSSSMDAKLEALKDLASLSRDVTFAQEFINLDGISLLTQMVESGTERYQKLQKIMKPCFGDMLSFTLTAFVELMDHGIVSWDTFSVAFIKKIASFVNKSAIDISILQRSLAILESMVLNSHDLYQKVAQEITIGQLIPHLQGSDQEIQTYTIAVINALFLKAPDERRQEMANILAQKQLRSIILTHVIRAQRAINNEMAHQLYVLQVLTFNLLEDRMMTKMDPQDQAQRDIIFELRRIAFDAESEPNNSSGSMEKRKSMYTRDYKKLGFINHVNPAMDFTQTPPGMLALDNMLYFAKHHQDAYIRIVLENSSREDKHECPFGRSSIELTKMLCEILKVGELPSETCNDFHPMFFTHDRSFEEFFCICIQLLNKTWKEMRATSEDFNKVMQVVKEQVMRALTTKPSSLDQFKSKLQNLSYTEILKIRQSERMNQEDFQSRPILELKEKIQPEILELIKQQRLNRLVEGTCFRKLNARRRQDKFWYCRLSPNHKVLHYGDLEESPQGEVPHDSLQDKLPVADIKAVVTGKDCPHMKEKGALKQNKEVLELAFSILYDSNCQLNFIAPDKHEYCIWTDGLNALLGKDMMSDLTRNDLDTLLSMEIKLRLLDLENIQIPDAPPPIPKEPSNYDFVYDCN.

Tyr18 bears the Phosphotyrosine; by HCK mark. Residues Lys100 and Lys105 each carry the N6-acetyllysine modification. Tyr216 bears the Phosphotyrosine; by HCK mark. The ELMO domain maps to 319 to 492; that stretch reads AQRDIIFELR…VVKEQVMRAL (174 aa). Residue Ser344 is modified to Phosphoserine. Phosphotyrosine; by HCK is present on residues Tyr395 and Tyr511. The PH domain occupies 555–676; sequence RLVEGTCFRK…DGLNALLGKD (122 aa). The SH3-binding signature appears at 707-714; sequence PDAPPPIP. Tyr720 carries the phosphotyrosine; by HCK modification.

Interacts with ADGRB1. Interacts directly with the SH3-domain of DOCK1 via its SH3-binding site. Part of a complex with DOCK1 and RAC1. Part of a complex with DOCK1 and CRK isoform CRK-II. Interacts with PLEKHG6. Interacts with HCK (via SH3 domain). Interacts with ADGRB3. Interacts with DOCK5. Phosphorylated by HCK. Widely expressed, with a higher expression in the spleen and placenta.

It localises to the cytoplasm. The protein resides in the cell membrane. Involved in cytoskeletal rearrangements required for phagocytosis of apoptotic cells and cell motility. Acts in association with DOCK1 and CRK. Was initially proposed to be required in complex with DOCK1 to activate Rac Rho small GTPases. May enhance the guanine nucleotide exchange factor (GEF) activity of DOCK1. This chain is Engulfment and cell motility protein 1 (ELMO1), found in Homo sapiens (Human).